The following is a 390-amino-acid chain: NADH-quinone oxidoreductase subunit D (390 aa).

This sequence belongs to the complex I 49 kDa subunit family. In terms of assembly, NDH-1 is composed of 14 different subunits. Subunits NuoB, C, D, E, F, and G constitute the peripheral sector of the complex.

It is found in the cell membrane. The enzyme catalyses a quinone + NADH + 5 H(+)(in) = a quinol + NAD(+) + 4 H(+)(out). In terms of biological role, NDH-1 shuttles electrons from NADH, via FMN and iron-sulfur (Fe-S) centers, to quinones in the respiratory chain. The immediate electron acceptor for the enzyme in this species is believed to be ubiquinone. Couples the redox reaction to proton translocation (for every two electrons transferred, four hydrogen ions are translocated across the cytoplasmic membrane), and thus conserves the redox energy in a proton gradient. The chain is NADH-quinone oxidoreductase subunit D from Wolbachia pipientis subsp. Culex pipiens (strain wPip).